The sequence spans 433 residues: Serine--tRNA ligase (433 aa).

L-serine is bound at residue 235–237; the sequence is TSE. Residue 266–268 coordinates ATP; sequence RSE. Glu289 contacts L-serine. ATP is bound at residue 353–356; that stretch reads EISS. Ser388 contacts L-serine.

The protein belongs to the class-II aminoacyl-tRNA synthetase family. Type-1 seryl-tRNA synthetase subfamily. As to quaternary structure, homodimer. The tRNA molecule binds across the dimer.

The protein resides in the cytoplasm. It carries out the reaction tRNA(Ser) + L-serine + ATP = L-seryl-tRNA(Ser) + AMP + diphosphate + H(+). The catalysed reaction is tRNA(Sec) + L-serine + ATP = L-seryl-tRNA(Sec) + AMP + diphosphate + H(+). It functions in the pathway aminoacyl-tRNA biosynthesis; selenocysteinyl-tRNA(Sec) biosynthesis; L-seryl-tRNA(Sec) from L-serine and tRNA(Sec): step 1/1. Functionally, catalyzes the attachment of serine to tRNA(Ser). Is also able to aminoacylate tRNA(Sec) with serine, to form the misacylated tRNA L-seryl-tRNA(Sec), which will be further converted into selenocysteinyl-tRNA(Sec). The polypeptide is Serine--tRNA ligase (Burkholderia ambifaria (strain ATCC BAA-244 / DSM 16087 / CCUG 44356 / LMG 19182 / AMMD) (Burkholderia cepacia (strain AMMD))).